The primary structure comprises 756 residues: Serine/threonine-protein kinase DCLK2 (756 aa).

The disordered stretch occupies residues 1-44 (MASTRSIELEHFEERDKRPRPGSRRGAPSSSGGSSISGPKGNGL). Positions 7–19 (IELEHFEERDKRP) are enriched in basic and acidic residues. The span at 24–43 (RRGAPSSSGGSSISGPKGNG) shows a compositional bias: low complexity. T61 carries the phosphothreonine modification. Doublecortin domains lie at 72–158 (KKAR…VDYT) and 196–279 (KLVT…AQDD). 2 stretches are compositionally biased toward low complexity: residues 301–311 (KYSGSRSPGFS) and 323–346 (TPSSQLSTPKSTKSSSSSPTSPGS). The segment at 301–375 (KYSGSRSPGF…GPELDRCLSP (75 aa)) is disordered. Residues 353–364 (ISAQGRSSSNVN) show a composition bias toward polar residues. Position 361 is a phosphoserine (S361). Residues 393–650 (YRIGKVIGDG…AGEILSHPWV (258 aa)) enclose the Protein kinase domain. ATP-binding positions include 399–407 (IGDGNFAVV) and K422. D514 acts as the Proton acceptor in catalysis. At S646 the chain carries Phosphoserine. T665 carries the phosphothreonine modification. The interval 707-756 (QDSSRPSREQTSPVPPSAQEAPPPLESPRPPGPPATSGCDLAGTWRRHRD) is disordered. The span at 719-740 (PVPPSAQEAPPPLESPRPPGPP) shows a compositional bias: pro residues.

It belongs to the protein kinase superfamily. CAMK Ser/Thr protein kinase family. CaMK subfamily. In terms of assembly, binds to and stabilizes microtubules. Interacts with MAPK8IP1/JIP-1, MAPK8IP2/JIP-2, MAPK9/JNK2, PPP1R9B/NEURABIN-2 and actin. Post-translationally, autophosphorylated. Expressed in the central and peripheral nervous system including the brain, spinal cord, cranial and dorsal root ganglia and in the parasympathetic ganglia. Present in neurons, but not in glial cells, in most forebrain areas. Strong expression in the hippocampal CA1 pyramidal cell layer. Expressed in the photoreceptor sensory cilium complex and in eyes. Also detected in individual cells of the olfactory epithelium.

It localises to the cytoplasm. The protein localises to the cytoskeleton. It carries out the reaction L-seryl-[protein] + ATP = O-phospho-L-seryl-[protein] + ADP + H(+). It catalyses the reaction L-threonyl-[protein] + ATP = O-phospho-L-threonyl-[protein] + ADP + H(+). Protein kinase with a significantly reduced Ca(2+)+/CAM affinity and dependence compared to other members of the CaMK family. May play a role in the down-regulation of CRE-dependent gene activation probably by phosphorylation of the CREB coactivator CRTC2/TORC2 and the resulting retention of TORC2 in the cytoplasm. The protein is Serine/threonine-protein kinase DCLK2 (Dclk2) of Mus musculus (Mouse).